A 184-amino-acid polypeptide reads, in one-letter code: ATP synthase subunit b, chloroplastic (184 aa).

Residues 27–49 form a helical membrane-spanning segment; that stretch reads LATNPINLSVVFGVLIFFGKGVL.

It belongs to the ATPase B chain family. In terms of assembly, F-type ATPases have 2 components, F(1) - the catalytic core - and F(0) - the membrane proton channel. F(1) has five subunits: alpha(3), beta(3), gamma(1), delta(1), epsilon(1). F(0) has four main subunits: a(1), b(1), b'(1) and c(10-14). The alpha and beta chains form an alternating ring which encloses part of the gamma chain. F(1) is attached to F(0) by a central stalk formed by the gamma and epsilon chains, while a peripheral stalk is formed by the delta, b and b' chains.

Its subcellular location is the plastid. It is found in the chloroplast thylakoid membrane. Functionally, f(1)F(0) ATP synthase produces ATP from ADP in the presence of a proton or sodium gradient. F-type ATPases consist of two structural domains, F(1) containing the extramembraneous catalytic core and F(0) containing the membrane proton channel, linked together by a central stalk and a peripheral stalk. During catalysis, ATP synthesis in the catalytic domain of F(1) is coupled via a rotary mechanism of the central stalk subunits to proton translocation. Component of the F(0) channel, it forms part of the peripheral stalk, linking F(1) to F(0). This Nasturtium officinale (Watercress) protein is ATP synthase subunit b, chloroplastic.